Consider the following 439-residue polypeptide: Methylenetetrahydrofolate--tRNA-(uracil-5-)-methyltransferase TrmFO (439 aa).

Gly8 to Gly13 contacts FAD.

It belongs to the MnmG family. TrmFO subfamily. FAD serves as cofactor.

It localises to the cytoplasm. The catalysed reaction is uridine(54) in tRNA + (6R)-5,10-methylene-5,6,7,8-tetrahydrofolate + NADH + H(+) = 5-methyluridine(54) in tRNA + (6S)-5,6,7,8-tetrahydrofolate + NAD(+). It carries out the reaction uridine(54) in tRNA + (6R)-5,10-methylene-5,6,7,8-tetrahydrofolate + NADPH + H(+) = 5-methyluridine(54) in tRNA + (6S)-5,6,7,8-tetrahydrofolate + NADP(+). Functionally, catalyzes the folate-dependent formation of 5-methyl-uridine at position 54 (M-5-U54) in all tRNAs. The sequence is that of Methylenetetrahydrofolate--tRNA-(uracil-5-)-methyltransferase TrmFO from Dictyoglomus thermophilum (strain ATCC 35947 / DSM 3960 / H-6-12).